Consider the following 551-residue polypeptide: Prunin 1 Pru du 6 (551 aa).

An N-terminal signal peptide occupies residues 1–20 (MAKAFVFSLCLLLVFNGCLA). Disulfide bonds link Cys-32/Cys-65 and Cys-108/Cys-374. In terms of domain architecture, Cupin type-1 1 spans 37–312 (LQAREPDNRI…ALNVNEETAR (276 aa)). Disordered stretches follow at residues 111–194 (TFEE…QKTR), 238–293 (NPRK…NVFS), and 329–360 (GNLD…RQQQ). Composition is skewed to low complexity over residues 114–124 (ESQQSSQQGRQ), 132–148 (QQQQ…QQEQ), and 168–185 (QEQQ…QQFR). Arg-194 contributes to the Ca(2+) binding site. Residues 254-275 (QQGQSQPRQQGEQGRPGQHQQP) show a composition bias toward low complexity. The span at 282–293 (QEQQGNGNNVFS) shows a compositional bias: polar residues. The segment covering 339–350 (GRQEREHEERQQ) has biased composition (basic and acidic residues). The segment covering 351–360 (EQLQQERQQQ) has biased composition (low complexity). Residues 367–372 (NGLEET) carry the NGXEET; peptidase recognition motif motif. The Cupin type-1 2 domain occupies 380–529 (ENIGNPERAD…AYQISREQAR (150 aa)).

Belongs to the 11S seed storage protein (globulins) family. Hexamer of two trimers; each subunit is composed of an acidic and a basic chain derived from a single precursor and linked by a disulfide bond. Proteolytically processed from a single precursor to produce an acidic and a basic chain that are linked by a disulfide bond. Expressed in seed (at protein level). Expressed in seed.

Seed storage protein. In Prunus dulcis (Almond), this protein is Prunin 1 Pru du 6.